A 454-amino-acid chain; its full sequence is tRNA modification GTPase MnmE (454 aa).

Residues arginine 23, glutamate 80, and lysine 120 each contribute to the (6S)-5-formyl-5,6,7,8-tetrahydrofolate site. Residues 216-377 (GMKVVIAGRP…LRNNLKQSMG (162 aa)) form the TrmE-type G domain. Asparagine 226 provides a ligand contact to K(+). GTP is bound by residues 226 to 231 (NAGKSS), 245 to 251 (TDIAGTT), 270 to 273 (DTAG), 335 to 338 (NKAD), and 358 to 360 (SAR). Residue serine 230 participates in Mg(2+) binding. Threonine 245, isoleucine 247, and threonine 250 together coordinate K(+). Threonine 251 is a Mg(2+) binding site. Lysine 454 is a (6S)-5-formyl-5,6,7,8-tetrahydrofolate binding site.

It belongs to the TRAFAC class TrmE-Era-EngA-EngB-Septin-like GTPase superfamily. TrmE GTPase family. In terms of assembly, homodimer. Heterotetramer of two MnmE and two MnmG subunits. K(+) is required as a cofactor.

It is found in the cytoplasm. Exhibits a very high intrinsic GTPase hydrolysis rate. Involved in the addition of a carboxymethylaminomethyl (cmnm) group at the wobble position (U34) of certain tRNAs, forming tRNA-cmnm(5)s(2)U34. This is tRNA modification GTPase MnmE from Salmonella paratyphi A (strain AKU_12601).